The sequence spans 148 residues: Putative cyclin-dependent kinase inhibitor SPL2 (148 aa).

Serine 59 and serine 86 each carry phosphoserine.

It is found in the cytoplasmic granule. The protein resides in the cytoplasm. Putative cyclin-dependent kinase (CDK) inhibitor necessary and sufficient for PHO pathway-dependent down-regulation of low-affinity phosphate transport. This chain is Putative cyclin-dependent kinase inhibitor SPL2 (SPL2), found in Saccharomyces cerevisiae (strain YJM789) (Baker's yeast).